Reading from the N-terminus, the 340-residue chain is Methionine import ATP-binding protein MetN 2 (340 aa).

Residues 2–241 (ITLQNVVKEY…PKEKVTQRFV (240 aa)) enclose the ABC transporter domain. Position 38 to 45 (38 to 45 (GYSGAGKS)) interacts with ATP.

Belongs to the ABC transporter superfamily. Methionine importer (TC 3.A.1.24) family. In terms of assembly, the complex is composed of two ATP-binding proteins (MetN), two transmembrane proteins (MetI) and a solute-binding protein (MetQ).

The protein localises to the cell membrane. It catalyses the reaction L-methionine(out) + ATP + H2O = L-methionine(in) + ADP + phosphate + H(+). The enzyme catalyses D-methionine(out) + ATP + H2O = D-methionine(in) + ADP + phosphate + H(+). Functionally, part of the ABC transporter complex MetNIQ involved in methionine import. Responsible for energy coupling to the transport system. This Listeria innocua serovar 6a (strain ATCC BAA-680 / CLIP 11262) protein is Methionine import ATP-binding protein MetN 2.